Consider the following 311-residue polypeptide: Malate dehydrogenase (311 aa).

Residues Gly7–Gly13 and Asp34 each bind NAD(+). Residues Arg81 and Arg87 each coordinate substrate. NAD(+) contacts are provided by residues Asn94 and Ile117–Asn119. Substrate is bound by residues Asn119 and Arg153. The Proton acceptor role is filled by His177. NAD(+) is bound at residue Met227.

It belongs to the LDH/MDH superfamily. MDH type 1 family. Homodimer.

The enzyme catalyses (S)-malate + NAD(+) = oxaloacetate + NADH + H(+). Its function is as follows. Catalyzes the reversible oxidation of malate to oxaloacetate. In Haemophilus influenzae (strain PittGG), this protein is Malate dehydrogenase.